The chain runs to 43 residues: uncharacterized protein (43 aa).

A signal peptide spans 1–17 (MYRRLLLNLFCMVFLQA).

This is an uncharacterized protein from Helicobacter pylori (strain J99 / ATCC 700824) (Campylobacter pylori J99).